A 102-amino-acid chain; its full sequence is ATP-dependent Clp protease adapter protein ClpS (102 aa).

The protein belongs to the ClpS family. As to quaternary structure, binds to the N-terminal domain of the chaperone ClpA.

Its function is as follows. Involved in the modulation of the specificity of the ClpAP-mediated ATP-dependent protein degradation. The polypeptide is ATP-dependent Clp protease adapter protein ClpS (Shewanella loihica (strain ATCC BAA-1088 / PV-4)).